A 68-amino-acid chain; its full sequence is Putative transcript Y 10 protein (68 aa).

This Homo sapiens (Human) protein is Putative transcript Y 10 protein (TTTY10).